A 355-amino-acid chain; its full sequence is Protein RecA (355 aa).

69–76 is a binding site for ATP; that stretch reads GPESSGKT. The disordered stretch occupies residues 329 to 355; the sequence is AYGLPDREETKREETAQIPDTEKTKDV.

The protein belongs to the RecA family.

The protein localises to the cytoplasm. Functionally, can catalyze the hydrolysis of ATP in the presence of single-stranded DNA, the ATP-dependent uptake of single-stranded DNA by duplex DNA, and the ATP-dependent hybridization of homologous single-stranded DNAs. It interacts with LexA causing its activation and leading to its autocatalytic cleavage. This Desulfotalea psychrophila (strain LSv54 / DSM 12343) protein is Protein RecA.